We begin with the raw amino-acid sequence, 257 residues long: ECF RNA polymerase sigma factor SigE (257 aa).

Residues 87–153 (LVRQHADRVY…FLDMVRRRAR (67 aa)) form a sigma-70 factor domain-2 region. The Polymerase core binding motif lies at 111–114 (DLTQ). The tract at residues 186–236 (LQAALASLPPEFRAAVVLCDIEGLSYEEIGATLGVKLGTVRSRIHRGRQAL) is sigma-70 factor domain-4. The segment at residues 211 to 230 (YEEIGATLGVKLGTVRSRIH) is a DNA-binding region (H-T-H motif).

It belongs to the sigma-70 factor family. ECF subfamily. Interacts transiently with the RNA polymerase catalytic core formed by RpoA, RpoB, RpoC and RpoZ (2 alpha, 1 beta, 1 beta' and 1 omega subunit) to form the RNA polymerase holoenzyme that can initiate transcription. Interacts (via sigma-70 factor domain 4) with cognate anti-sigma-E factor RseA under reducing conditions, which stops the sigma factor from functioning.

Its function is as follows. Sigma factors are initiation factors that promote the attachment of RNA polymerase to specific initiation sites and are then released. Extracytoplasmic function (ECF) sigma factors are held in an inactive form by an anti-sigma factor until released. Responds to surface stress (H(2)O(2)). The polypeptide is ECF RNA polymerase sigma factor SigE (sigE) (Mycobacterium tuberculosis (strain ATCC 35801 / TMC 107 / Erdman)).